The primary structure comprises 1319 residues: Protein Jumonji (1319 aa).

Basic residues predominate over residues Met-1–Ile-11. 7 disordered regions span residues Met-1–Trp-23, Asp-50–Pro-130, Asp-173–Gly-265, Tyr-351–Asn-382, His-396–Asn-478, Pro-499–Ala-537, and Gln-549–Ala-599. Over residues Ala-61 to Gly-70 the composition is skewed to polar residues. Residues Gly-74 to Gly-88 show a composition bias toward basic and acidic residues. The Nuclear localization signal signature appears at Pro-96–Arg-102. A compositionally biased stretch (basic residues) spans Lys-98–Arg-107. The segment covering Phe-109–Pro-121 has biased composition (polar residues). The span at Asp-173–Glu-185 shows a compositional bias: acidic residues. A compositionally biased stretch (polar residues) spans Val-191–Pro-200. Basic and acidic residues predominate over residues Lys-221–His-251. The segment covering Leu-372–Asn-382 has biased composition (polar residues). Positions Ser-413–Val-424 are enriched in basic and acidic residues. A compositionally biased stretch (pro residues) spans Pro-505–Pro-515. 2 stretches are compositionally biased toward low complexity: residues Ala-516–Ala-525 and Thr-554–Ser-570. The segment covering Arg-583–Arg-598 has biased composition (basic and acidic residues). Residues Val-607 to Glu-648 enclose the JmjN domain. The ARID domain maps to Trp-671–Pro-779. Positions Arg-798–His-811 are enriched in basic and acidic residues. The disordered stretch occupies residues Arg-798–Arg-818. Positions Gly-944–Pro-948 match the GSGFP motif motif. A JmjC domain is found at Pro-954–Lys-1118.

It belongs to the JARID2 family. In terms of assembly, associates with the PRC2 complex.

It localises to the nucleus. In terms of biological role, regulator of histone methyltransferase complexes that plays an essential role in embryonic development. Acts by modulating histone methyltransferase activity and promoting the recruitment of histone methyltransferase complexes to their target genes. Binds DNA and mediates the recruitment of the PRC2 complex to target genes in embryonic stem cells. Does not have histone demethylase activity but regulates activity of various histone methyltransferase complexes. In embryonic stem cells, it associates with the PRC2 complex and inhibits trimethylation of 'Lys-27' of histone H3 (H3K27me3) by the PRC2 complex, thereby playing a key role in differentiation of embryonic stem cells and normal development. The sequence is that of Protein Jumonji (jarid2b) from Danio rerio (Zebrafish).